A 375-amino-acid polypeptide reads, in one-letter code: MDIEERIKLVLKKPTEEVLTVENLRHLFEIGAPLQHYIGFEISGYIHLGTGLMAGAKIADFQKAGIKTRVFLADWHSWINDKLGGDLETIQEVALKYFKVGMEKSIEVMGGKPEKVEFVLASEILEKGDYWQTVIDISKNVTLSRVLRSITIMGRKMGEAIDFAKLIYPMMQVADIFYQGVTIAHAGMDQRKAHVIAIEVAEKLRYHPIIHNGEKLKPVAVHHHLLLGLQEPPKWPIESEEEFKEIKAEMKMSKSKPYSAVFIHDSPEEIREKLRKAFCPAREVKYNPVLDWVEYLVFREEPTEFTIHRPAKYGGDVTYTTFEELKRDFAEGKLHPLDLKNAVAEYLIDLLEPIRKYFERHPEPLELMKSVQITR.

L-tyrosine is bound by residues Tyr-37, Tyr-168, Gln-172, Asp-175, and Gln-190. The 'KMSKS' region motif lies at 251-255 (KMSKS). Lys-254 is a binding site for ATP.

This sequence belongs to the class-I aminoacyl-tRNA synthetase family. TyrS type 4 subfamily. Homodimer.

It is found in the cytoplasm. It carries out the reaction tRNA(Tyr) + L-tyrosine + ATP = L-tyrosyl-tRNA(Tyr) + AMP + diphosphate + H(+). Functionally, catalyzes the attachment of tyrosine to tRNA(Tyr) in a two-step reaction: tyrosine is first activated by ATP to form Tyr-AMP and then transferred to the acceptor end of tRNA(Tyr). This is Tyrosine--tRNA ligase from Pyrococcus furiosus (strain ATCC 43587 / DSM 3638 / JCM 8422 / Vc1).